A 183-amino-acid polypeptide reads, in one-letter code: Adenine phosphoribosyltransferase (183 aa).

It belongs to the purine/pyrimidine phosphoribosyltransferase family. Homodimer.

It localises to the cytoplasm. It catalyses the reaction AMP + diphosphate = 5-phospho-alpha-D-ribose 1-diphosphate + adenine. It participates in purine metabolism; AMP biosynthesis via salvage pathway; AMP from adenine: step 1/1. Its function is as follows. Catalyzes a salvage reaction resulting in the formation of AMP, that is energically less costly than de novo synthesis. The protein is Adenine phosphoribosyltransferase of Erwinia tasmaniensis (strain DSM 17950 / CFBP 7177 / CIP 109463 / NCPPB 4357 / Et1/99).